A 318-amino-acid polypeptide reads, in one-letter code: HPr kinase/phosphorylase (318 aa).

Active-site residues include His-146 and Lys-167. 161-168 (GESGLGKS) contributes to the ATP binding site. A Mg(2+)-binding site is contributed by Ser-168. The active-site Proton acceptor; for phosphorylation activity. Proton donor; for dephosphorylation activity is the Asp-185. Residues 209-218 (LEVRGIGLLD) are important for the catalytic mechanism of both phosphorylation and dephosphorylation. Residue Glu-210 coordinates Mg(2+). Arg-252 is an active-site residue. The segment at 273–278 (QVVAGR) is important for the catalytic mechanism of dephosphorylation.

It belongs to the HPrK/P family. As to quaternary structure, homohexamer. Requires Mg(2+) as cofactor.

It catalyses the reaction [HPr protein]-L-serine + ATP = [HPr protein]-O-phospho-L-serine + ADP + H(+). The catalysed reaction is [HPr protein]-O-phospho-L-serine + phosphate + H(+) = [HPr protein]-L-serine + diphosphate. Functionally, catalyzes the ATP- as well as the pyrophosphate-dependent phosphorylation of a specific serine residue in HPr, a phosphocarrier protein of the phosphoenolpyruvate-dependent sugar phosphotransferase system (PTS). HprK/P also catalyzes the pyrophosphate-producing, inorganic phosphate-dependent dephosphorylation (phosphorolysis) of seryl-phosphorylated HPr (P-Ser-HPr). This chain is HPr kinase/phosphorylase, found in Acidovorax sp. (strain JS42).